We begin with the raw amino-acid sequence, 159 residues long: Ribosomal RNA large subunit methyltransferase H (159 aa).

S-adenosyl-L-methionine is bound by residues Leu76, Gly108, and 127–132 (FGKLTM).

This sequence belongs to the RNA methyltransferase RlmH family. Homodimer.

It is found in the cytoplasm. The catalysed reaction is pseudouridine(1915) in 23S rRNA + S-adenosyl-L-methionine = N(3)-methylpseudouridine(1915) in 23S rRNA + S-adenosyl-L-homocysteine + H(+). In terms of biological role, specifically methylates the pseudouridine at position 1915 (m3Psi1915) in 23S rRNA. The protein is Ribosomal RNA large subunit methyltransferase H of Lactobacillus delbrueckii subsp. bulgaricus (strain ATCC 11842 / DSM 20081 / BCRC 10696 / JCM 1002 / NBRC 13953 / NCIMB 11778 / NCTC 12712 / WDCM 00102 / Lb 14).